The chain runs to 470 residues: Maturase K (470 aa).

It belongs to the intron maturase 2 family. MatK subfamily.

The protein resides in the plastid. It is found in the chloroplast. Its function is as follows. Usually encoded in the trnK tRNA gene intron. Probably assists in splicing its own and other chloroplast group II introns. The sequence is that of Maturase K from Nypa fruticans (Nypa palm).